The sequence spans 264 residues: DNA-directed RNA polymerase subunit Rpo3 (264 aa).

Residues Cys203, Cys206, and Cys209 each coordinate [3Fe-4S] cluster.

Belongs to the archaeal Rpo3/eukaryotic RPB3 RNA polymerase subunit family. Part of the RNA polymerase complex. It depends on [3Fe-4S] cluster as a cofactor.

The protein resides in the cytoplasm. The enzyme catalyses RNA(n) + a ribonucleoside 5'-triphosphate = RNA(n+1) + diphosphate. Functionally, DNA-dependent RNA polymerase (RNAP) catalyzes the transcription of DNA into RNA using the four ribonucleoside triphosphates as substrates. The polypeptide is DNA-directed RNA polymerase subunit Rpo3 (Methanothermobacter thermautotrophicus (strain ATCC 29096 / DSM 1053 / JCM 10044 / NBRC 100330 / Delta H) (Methanobacterium thermoautotrophicum)).